The sequence spans 434 residues: Enolase (434 aa).

Positions 158 and 167 each coordinate substrate. The Proton donor role is filled by E210. Positions 245, 294, and 319 each coordinate Mg(2+). Positions 294 and 319 each coordinate substrate. The active-site Proton acceptor is K344. Substrate-binding positions include 371 to 374 (SHRS) and K395.

The protein belongs to the enolase family. In terms of assembly, homodimer. The cofactor is Mg(2+).

It is found in the cytoplasm. The catalysed reaction is (2R)-2-phosphoglycerate = phosphoenolpyruvate + H2O. It participates in carbohydrate degradation; glycolysis; pyruvate from D-glyceraldehyde 3-phosphate: step 4/5. In Caenorhabditis elegans, this protein is Enolase.